We begin with the raw amino-acid sequence, 517 residues long: Crotonobetaine/carnitine--CoA ligase (517 aa).

It belongs to the ATP-dependent AMP-binding enzyme family.

The catalysed reaction is 4-(trimethylamino)butanoate + ATP + CoA = 4-(trimethylamino)butanoyl-CoA + AMP + diphosphate. The enzyme catalyses crotonobetaine + ATP + CoA = crotonobetainyl-CoA + AMP + diphosphate. It carries out the reaction (R)-carnitine + ATP + CoA = (R)-carnitinyl-CoA + AMP + diphosphate. It participates in amine and polyamine metabolism; carnitine metabolism. In terms of biological role, catalyzes the transfer of CoA to carnitine, generating the initial carnitinyl-CoA needed for the CaiB reaction cycle. Also has activity toward crotonobetaine and gamma-butyrobetaine. The sequence is that of Crotonobetaine/carnitine--CoA ligase from Salmonella choleraesuis (strain SC-B67).